The sequence spans 422 residues: Tyrosine--tRNA ligase 1 (422 aa).

Tyr-36 contributes to the L-tyrosine binding site. Positions 41–50 (PTAGSLHIGH) match the 'HIGH' region motif. Positions 173 and 177 each coordinate L-tyrosine. A 'KMSKS' region motif is present at residues 233-237 (KFGKT). ATP is bound at residue Lys-236. The S4 RNA-binding domain occupies 355–419 (SDVVTLLLET…GKKQFAMVKL (65 aa)).

The protein belongs to the class-I aminoacyl-tRNA synthetase family. TyrS type 1 subfamily. As to quaternary structure, homodimer.

The protein resides in the cytoplasm. It catalyses the reaction tRNA(Tyr) + L-tyrosine + ATP = L-tyrosyl-tRNA(Tyr) + AMP + diphosphate + H(+). Catalyzes the attachment of tyrosine to tRNA(Tyr) in a two-step reaction: tyrosine is first activated by ATP to form Tyr-AMP and then transferred to the acceptor end of tRNA(Tyr). This Vibrio vulnificus (strain CMCP6) protein is Tyrosine--tRNA ligase 1.